The primary structure comprises 74 residues: U5-theraphotoxin-Cg1a (74 aa).

A signal peptide spans 1–19 (MNATIFALLLLLNLAMYNA). Positions 20 to 39 (AEQSSETDMDDTLLIPENYR) are excised as a propeptide. 3 disulfide bridges follow: Cys42/Cys56, Cys49/Cys61, and Cys55/Cys71.

The protein belongs to the neurotoxin 36 family. 01 subfamily. In terms of tissue distribution, expressed by the venom gland.

The protein localises to the secreted. Its function is as follows. Probable ion channel inhibitor. The protein is U5-theraphotoxin-Cg1a of Chilobrachys guangxiensis (Chinese earth tiger tarantula).